A 277-amino-acid polypeptide reads, in one-letter code: Putative ankyrin repeat protein L81 (277 aa).

ANK repeat units lie at residues 150–179 (FGQT…DLHQ) and 183–215 (QGRS…DLYQ).

This is Putative ankyrin repeat protein L81 from Acanthamoeba polyphaga (Amoeba).